Consider the following 95-residue polypeptide: Cobalt transport protein CbiN (95 aa).

Helical transmembrane passes span 5-25 (HILM…IYSG) and 67-87 (LLFA…FGYY).

It belongs to the CbiN family. In terms of assembly, forms an energy-coupling factor (ECF) transporter complex composed of an ATP-binding protein (A component, CbiO), a transmembrane protein (T component, CbiQ) and 2 possible substrate-capture proteins (S components, CbiM and CbiN) of unknown stoichimetry.

It is found in the cell membrane. The protein operates within cofactor biosynthesis; adenosylcobalamin biosynthesis. Its function is as follows. Part of the energy-coupling factor (ECF) transporter complex CbiMNOQ involved in cobalt import. The protein is Cobalt transport protein CbiN of Methanothermobacter thermautotrophicus (strain ATCC 29096 / DSM 1053 / JCM 10044 / NBRC 100330 / Delta H) (Methanobacterium thermoautotrophicum).